We begin with the raw amino-acid sequence, 1400 residues long: DNA-directed RNA polymerase subunit beta' (1400 aa).

Zn(2+) contacts are provided by Cys-70, Cys-72, Cys-85, and Cys-88. Asp-460, Asp-462, and Asp-464 together coordinate Mg(2+). Positions 814, 888, 895, and 898 each coordinate Zn(2+). The tract at residues 1367–1400 (DRQAKRAEAQEGPSAEQATDNLAALLNAGFSSDE) is disordered.

This sequence belongs to the RNA polymerase beta' chain family. As to quaternary structure, the RNAP catalytic core consists of 2 alpha, 1 beta, 1 beta' and 1 omega subunit. When a sigma factor is associated with the core the holoenzyme is formed, which can initiate transcription. The cofactor is Mg(2+). Requires Zn(2+) as cofactor.

It catalyses the reaction RNA(n) + a ribonucleoside 5'-triphosphate = RNA(n+1) + diphosphate. In terms of biological role, DNA-dependent RNA polymerase catalyzes the transcription of DNA into RNA using the four ribonucleoside triphosphates as substrates. The chain is DNA-directed RNA polymerase subunit beta' from Vibrio campbellii (strain ATCC BAA-1116).